Consider the following 34-residue polypeptide: Photosystem II reaction center protein M (34 aa).

Residues 7–27 (GFVASLMFILVPAIFLIVLYI) form a helical membrane-spanning segment.

It belongs to the PsbM family. PSII is composed of 1 copy each of membrane proteins PsbA, PsbB, PsbC, PsbD, PsbE, PsbF, PsbH, PsbI, PsbJ, PsbK, PsbL, PsbM, PsbT, PsbX, PsbY, PsbZ, Psb30/Ycf12, peripheral proteins PsbO, CyanoQ (PsbQ), PsbU, PsbV and a large number of cofactors. It forms dimeric complexes.

The protein resides in the cellular thylakoid membrane. One of the components of the core complex of photosystem II (PSII). PSII is a light-driven water:plastoquinone oxidoreductase that uses light energy to abstract electrons from H(2)O, generating O(2) and a proton gradient subsequently used for ATP formation. It consists of a core antenna complex that captures photons, and an electron transfer chain that converts photonic excitation into a charge separation. This subunit is found at the monomer-monomer interface. The sequence is that of Photosystem II reaction center protein M from Synechococcus sp. (strain CC9902).